A 420-amino-acid chain; its full sequence is Serine hydroxymethyltransferase (420 aa).

Residues L121 and 125–127 (GHL) each bind (6S)-5,6,7,8-tetrahydrofolate. N6-(pyridoxal phosphate)lysine is present on K230.

The protein belongs to the SHMT family. Homodimer. Pyridoxal 5'-phosphate is required as a cofactor.

The protein localises to the cytoplasm. It catalyses the reaction (6R)-5,10-methylene-5,6,7,8-tetrahydrofolate + glycine + H2O = (6S)-5,6,7,8-tetrahydrofolate + L-serine. The protein operates within one-carbon metabolism; tetrahydrofolate interconversion. It functions in the pathway amino-acid biosynthesis; glycine biosynthesis; glycine from L-serine: step 1/1. Catalyzes the reversible interconversion of serine and glycine with tetrahydrofolate (THF) serving as the one-carbon carrier. This reaction serves as the major source of one-carbon groups required for the biosynthesis of purines, thymidylate, methionine, and other important biomolecules. Also exhibits THF-independent aldolase activity toward beta-hydroxyamino acids, producing glycine and aldehydes, via a retro-aldol mechanism. The chain is Serine hydroxymethyltransferase from Streptomyces avermitilis (strain ATCC 31267 / DSM 46492 / JCM 5070 / NBRC 14893 / NCIMB 12804 / NRRL 8165 / MA-4680).